Reading from the N-terminus, the 1189-residue chain is MSAGGNARKSTGRPSYYYRLLRRPRLQRQRSRSRSRTRPARESPQERPGSRRSLPGSMSEKNPSMEPSASTPFRVTGFLSRRLKGSIKRTKSQPKLDRNHSFRHILPGFRSAAAAAADNERSHLMPRLKESRSHESLLSPSSAVEALDLSMEEEVIIKPVHSSILGQDYCFEVTTSSGSKCFSCRSAAERDKWMENLRRAVHPNKDNSRRVEHILKLWVIEAKDLPAKKKYLCELCLDDVLYARTTSKLKTDNVFWGEHFEFHNLPPLRTVTVHLYRETDKKKKKERNSYLGLVSLPAASVAGRQFVEKWYPVVTPNPKGGKGPGPMIRIKARYQTVSILPMEMYKEFAEHITNHYLGLCAALEPILSAKTKEEMASALVHILQSTGKVKDFLTDLMMSEVDRCGDNEHLIFRENTLATKAIEEYLKLVGQKYLQDALGEFIKALYESDENCEVDPSKCSSADLPEHQGNLKMCCELAFCKIINSYCVFPRELKEVFASWRQECSSRGRPDISERLISASLFLRFLCPAIMSPSLFNLLQEYPDDRTARTLTLIAKVTQNLANFAKFGSKEEYMSFMNQFLEHEWTNMQRFLLEISNPETLSNTAGFEGYIDLGRELSSLHSLLWEAVSQLDQSVVSKLGPLPRILRDVHTALSTPGSGQLPGTNDLASTPGSGSSSVSAGLQKMVIENDLSGLIDFTRLPSPTPENKDLFFVTRSSGVQPSPARSSSYSEANEPDLQMANGSKSLSMVDLQDARTLDGEAGSPVGPDALPADGQVPATQLLAGWPARAAPVSLAGLATVRRAVPTPTTPGTSEGAPGRPQLLAPLSFQNPVYQMAAGLPLSPRGLGDSGSEGHSSLSSHSNSEELAAAAKLGSFSTAAEELARRPGELARRQMSLTEKGGQPTVPRQNSAGPQRRIDQPPPPPPPPPPAPRGRTPPTLLSTLQYPRPSSGTLASASPDWAGPGTRLRQQSSSSKGDSPELKPRAMHKQGPSPVSPNALDRTAAWLLTMNAQLLEDEGLGPDPPHRDRLRSKEELSQAEKDLAVLQDKLRISTKKLEEYETLFKCQEETTQKLVLEYQARLEEGEERLRRQQEDKDIQMKGIISRLMSVEEELKKDHAEMQAAVDSKQKIIDAQEKRIASLDAANARLMSALTQLKERYSMQARNGVSPTNPTKLQITENGEFRNSSNC.

A disordered region spans residues 1–75 (MSAGGNARKS…EPSASTPFRV (75 aa)). Residues 20-38 (LLRRPRLQRQRSRSRSRTR) are compositionally biased toward basic residues. Basic and acidic residues predominate over residues 39–49 (PARESPQERPG). Polar residues predominate over residues 59–73 (SEKNPSMEPSASTPF). Residues 101–202 (SFRHILPGFR…WMENLRRAVH (102 aa)) enclose the PH domain. Residues 193 to 311 (WMENLRRAVH…AGRQFVEKWY (119 aa)) form the C2 domain. The 209-residue stretch at 387–595 (GKVKDFLTDL…TNMQRFLLEI (209 aa)) folds into the Ras-GAP domain. The necessary for interaction with AKT1 stretch occupies residues 646 to 943 (LRDVHTALST…RTPPTLLSTL (298 aa)). Positions 653 to 668 (LSTPGSGQLPGTNDLA) are enriched in polar residues. Disordered regions lie at residues 653–679 (LSTPGSGQLPGTNDLASTPGSGSSSVS) and 715–738 (RSSGVQPSPARSSSYSEANEPDLQ). Positions 669–679 (STPGSGSSSVS) are enriched in low complexity. A compositionally biased stretch (polar residues) spans 715-731 (RSSGVQPSPARSSSYSE). Ser728 bears the Phosphoserine; by MAP3K5 and RIPK1 mark. Residue Ser747 is modified to Phosphoserine. 5 disordered regions span residues 804-823 (VPTPTTPGTSEGAPGRPQLL), 843-865 (PRGLGDSGSEGHSSLSSHSNSEE), 895-998 (SLTE…SPNA), 1015-1034 (EDEGLGPDPPHRDRLRSKEE), and 1163-1189 (ARNGVSPTNPTKLQITENGEFRNSSNC). A compositionally biased stretch (low complexity) spans 852-865 (EGHSSLSSHSNSEE). Pro residues predominate over residues 919 to 931 (QPPPPPPPPPPAP). 2 stretches are compositionally biased toward polar residues: residues 939-955 (LLSTLQYPRPSSGTLAS) and 967-976 (LRQQSSSSKG). Phosphoserine occurs at positions 978 and 995. The segment covering 1023-1034 (PPHRDRLRSKEE) has biased composition (basic and acidic residues). A coiled-coil region spans residues 1025–1159 (HRDRLRSKEE…SALTQLKERY (135 aa)).

On plasma membrane, exists in an inactive form complexed with TNFR1; in response to TNF-alpha, dissociates from TNFR1 complex, translocates to cytoplasm and forms part of an intracellular signaling complex comprising TRADD, RIPK1, TRAF2 and MAP3K5. Interacts with DAB1. Part of a cytoplasmic complex made of HIPK1, DAB2IP and MAP3K5 in response to TNF-alpha; this complex formation promotes MAP3K5-JNK activation and subsequent apoptosis. Interacts (via N-terminal domain) with JAK2; the interaction occurs in a IFNG/IFN-gamma-dependent manner and inhibits JAK2 autophosphorylation activity. Interacts (via C2 domain) with GSK3B; the interaction stimulates GSK3B kinase activation. Interacts (via C2 domain) with PPP2CA. Interacts (via proline-rich motif) with a regulatory p85 subunit (via SH3 domain) of the PI3K complex; the interaction inhibits the PI3K-AKT complex activity in a TNF-alpha-dependent manner in prostate cancer (PCa) cells. Interacts with AKT1; the interaction is increased in a TNF-alpha-induced manner. Interacts (via C2 domain and active form preferentially) with KDR/VEGFR2 (tyrosine-phosphorylated active form preferentially); the interaction occurs at the late phase of VEGFA response and inhibits KDR/VEGFR2 activity. Interacts (via N-terminus C2 domain) with MAP3K5 ('Ser-966' dephosphorylated form preferentially); the interaction occurs in a TNF-alpha-induced manner. Interacts (via Ras-GAP domain) with the catalytic subunit of protein phosphatase PP2A; the interaction occurs in resting endothelial cells, is further enhanced by TNF-alpha stimulation and is required to bridge PP2A to MAP3K5. Interacts (via C-terminus PER domain) with TRAF2 (via zinc fingers); the interaction occurs in a TNF-alpha-dependent manner. Interacts with 14-3-3 proteins; the interaction occurs in a TNF-alpha-dependent manner. Interacts (via Ras-GAP domain) with RIPK1 (via kinase domain); the interaction occurs in a TNF-alpha-dependent manner. Interacts (via PH domain) with ERN1. Interacts with TRAF2. Interacts (via NPXY motif) with DAB2 (via PID domain). Interacts with RAB40C; acts as a GAP for RAB40C. In response to TNF-alpha-induction, phosphorylated at Ser-728; phosphorylation leads to a conformational change, and thus, increases its association with 14-3-3 proteins, MAP3K5, RIPK1 and TRAF2 in endothelial cells; also stimulates regulatory p85 subunit sequestring and PI3K-p85 complex activity inhibition. As to expression, expressed in vascular endothelium of muscle and aorta, in smooth muscle cells of aorta and epithelial cells of lung. Expressed throughout the brain, including olfactory bulb, hypothalamus, cerebellum and cerebral cortex. Expressed in the soma and processes of neurons in a variety of brain structures, including the developing cerebral cortex, CA1 pyramidal neurons and Purkinje cells. Poorly expressed in medulloblastoma cells compared to cerebellar precursor proliferating progenitor cells (at protein level). Highly expressed in the brain, salivary gland, and testis; moderate expression in kidney and heart. Low expression in the lung, seminal vesicle, ventral prostate, epididymis, liver, and bladder. Very low expression in the coagulation gland and skeleton muscles. Lowest expression seen in spleen.

It is found in the cytoplasm. The protein localises to the cell membrane. It localises to the membrane. The protein resides in the cell projection. Its subcellular location is the dendrite. Functions as a scaffold protein implicated in the regulation of a large spectrum of both general and specialized signaling pathways. Involved in several processes such as innate immune response, inflammation and cell growth inhibition, apoptosis, cell survival, angiogenesis, cell migration and maturation. Also plays a role in cell cycle checkpoint control; reduces G1 phase cyclin levels resulting in G0/G1 cell cycle arrest. Mediates signal transduction by receptor-mediated inflammatory signals, such as the tumor necrosis factor (TNF), interferon (IFN) or lipopolysaccharide (LPS). Modulates the balance between phosphatidylinositol 3-kinase (PI3K)-AKT-mediated cell survival and apoptosis stimulated kinase (MAP3K5)-JNK signaling pathways; sequesters both AKT1 and MAP3K5 and counterbalances the activity of each kinase by modulating their phosphorylation status in response to pro-inflammatory stimuli. Acts as a regulator of the endoplasmic reticulum (ER) unfolded protein response (UPR) pathway; specifically involved in transduction of the ER stress-response to the JNK cascade through ERN1. Mediates TNF-alpha-induced apoptosis activation by facilitating dissociation of inhibitor 14-3-3 from MAP3K5; recruits the PP2A phosphatase complex which dephosphorylates MAP3K5 on 'Ser-966', leading to the dissociation of 13-3-3 proteins and activation of the MAP3K5-JNK signaling pathway in endothelial cells. Also mediates TNF/TRAF2-induced MAP3K5-JNK activation, while it inhibits CHUK-NF-kappa-B signaling. Acts a negative regulator in the IFN-gamma-mediated JAK-STAT signaling cascade by inhibiting smooth muscle cell (VSMCs) proliferation and intimal expansion, and thus, prevents graft arteriosclerosis (GA). Acts as a GTPase-activating protein (GAP) for the ADP ribosylation factor 6 (ARF6) and Ras. Promotes hydrolysis of the ARF6-bound GTP and thus, negatively regulates phosphatidylinositol 4,5-bisphosphate (PIP2)-dependent TLR4-TIRAP-MyD88 and NF-kappa-B signaling pathways in endothelial cells in response to lipopolysaccharides (LPS). Binds specifically to phosphatidylinositol 4-phosphate (PtdIns4P) and phosphatidylinositol 3-phosphate (PtdIns3P). In response to vascular endothelial growth factor (VEGFA), acts as a negative regulator of the VEGFR2-PI3K-mediated angiogenic signaling pathway by inhibiting endothelial cell migration and tube formation. In the developing brain, promotes both the transition from the multipolar to the bipolar stage and the radial migration of cortical neurons from the ventricular zone toward the superficial layer of the neocortex in a glial-dependent locomotion process. Probable downstream effector of the Reelin signaling pathway; promotes Purkinje cell (PC) dendrites development and formation of cerebellar synapses. Also functions as a tumor suppressor protein in prostate cancer progression; prevents cell proliferation and epithelial-to-mesenchymal transition (EMT) through activation of the glycogen synthase kinase-3 beta (GSK3B)-induced beta-catenin and inhibition of PI3K-AKT and Ras-MAPK survival downstream signaling cascades, respectively. In Mus musculus (Mouse), this protein is Disabled homolog 2-interacting protein (Dab2ip).